Reading from the N-terminus, the 103-residue chain is Growth-regulated alpha protein (103 aa).

A signal peptide spans 1 to 30 (MARAANPAPRLLGAAMLLLLLVAAGRRAAG). Cystine bridges form between C39-C65 and C41-C81.

It belongs to the intercrine alpha (chemokine CxC) family.

The protein resides in the secreted. In terms of biological role, has chemotactic activity for neutrophils. The sequence is that of Growth-regulated alpha protein (CXCL1) from Ovis aries (Sheep).